Consider the following 61-residue polypeptide: Large ribosomal subunit protein uL30 (61 aa).

It belongs to the universal ribosomal protein uL30 family. Part of the 50S ribosomal subunit.

This chain is Large ribosomal subunit protein uL30, found in Jannaschia sp. (strain CCS1).